A 123-amino-acid chain; its full sequence is Small ribosomal subunit protein uS12 (123 aa).

Residue Asp-89 is modified to 3-methylthioaspartic acid.

Belongs to the universal ribosomal protein uS12 family. As to quaternary structure, part of the 30S ribosomal subunit. Contacts proteins S8 and S17. May interact with IF1 in the 30S initiation complex.

Functionally, with S4 and S5 plays an important role in translational accuracy. Interacts with and stabilizes bases of the 16S rRNA that are involved in tRNA selection in the A site and with the mRNA backbone. Located at the interface of the 30S and 50S subunits, it traverses the body of the 30S subunit contacting proteins on the other side and probably holding the rRNA structure together. The combined cluster of proteins S8, S12 and S17 appears to hold together the shoulder and platform of the 30S subunit. In Maridesulfovibrio salexigens (strain ATCC 14822 / DSM 2638 / NCIMB 8403 / VKM B-1763) (Desulfovibrio salexigens), this protein is Small ribosomal subunit protein uS12.